The following is a 1054-amino-acid chain: MDRRSWPWKKKASDKSILVIDSAADASHSQIDKEAIKKPKYVQISVEQYTHFTGLEEQIKSYDVQIKGYDVQVKTYENQVESYEEQVKDFEEQIDAYDEKVHEYEEQVQKLNEDVEDLNEKLSVANEEIVTKEALVKQHSKVAEDAVSGWEKADAEALALKNTLESVTLSKLTAEDRAAHLDGALKECMRQIRNLKKDHEVKLHDVALSKTKQIEKMTMEFEKRMCDYEQELLRSAADSDALSRTLQERSNMLVKVSEEKSRADAEIETLKSNLEMCEREIKSLKYEVHVVSKELEIRNEEKNMCIRSAESANKQHLEGVKKIAKLEAECQRLRSLVRKKLPGPAALAQMKLEVENLGRDSGDARQKRSPVKVSSPCKSPGGYSSTGSEFSLDNAQKFQKENEFLTERLLAMEEETKMLKEALAKRNSELLESRNLCAQSTSKLQSLEAQLQQNNSQKSSLEVCPNLNTSNPSSSISVSEDGNDDSGSCSGSLSTNPSQQIKKEKDMAALERVESVNSHVELMDDFLEMEKLACLPNLSSSNGSIDSKDGSGDQKSEMVILDAHTDLEDSDRGSPAVMKFRSRLSKVLESVSPDADIQKIVGDIKCILQDVNACMDQEKPSEVHVHPEEVSDLCPEQNLVEDCHLAEQKLQSIHQDLKNAVSRIHDFVLLLRNEVKAGQDTSIEGNDFVELIEGFSVTFNHVLSGDKSLDDFVSNLANVFNEAMERKVSFRGLASSEVETLSPDCIDKVALPESKVVDKDSSQEIYQNGCVHNEPGVPCDENRVSGYESDSKLQEIEELRSEKEKMAVDIEGLKCQLQESEQLLADIRSQFDSAQRSNRLADTQLRCMTESYRSLESRAADLEIDVNQLKEKIQKLENELEDEKCNHQEAILRCHELEEHIQRHRNTSLVAEDDEEADIKSKQERELSAAAEKLAECQETIFVLGKQLKSFRPQPEQMRSPQTRNESYSEEEELGTTTTSVPKNYAVVDEGDSVNEVPRFMESPKCPSDSETSDTTTSPSRVGSRLSRSGSSTNATPEKASRGISRFFSSKSGY.

Coiled coils occupy residues Val-64–His-139, Ala-174–Glu-200, and Ser-250–Leu-341. Disordered regions lie at residues Arg-359 to Phe-390 and Glu-448 to Asp-506. Composition is skewed to low complexity over residues Val-371 to Pro-380, Gln-450 to Leu-461, and Ser-470 to Ser-494. Residues Glu-389–Val-463 are a coiled coil. Coiled-coil stretches lie at residues Gln-637–Asp-666 and Glu-788–Leu-944. The interval Phe-951 to Tyr-1054 is disordered. Over residues Pro-1007–Ser-1032 the composition is skewed to low complexity.

It belongs to the FPP family. In terms of assembly, interacts with WPP/MAF proteins.

The sequence is that of Filament-like plant protein 6 (FPP6) from Arabidopsis thaliana (Mouse-ear cress).